The primary structure comprises 719 residues: Exonuclease mut-7 homolog (719 aa).

Residues 1 to 22 (MSKSNNVAPPCRQDQLGFVPAG) form a disordered region. The region spanning 575 to 629 (NLANLVRLCLGKKLDKSNQFSNWAQRPLRKEQLRYAALDAFCLLEIYDAIEKQLT) is the 3'-5' exonuclease domain. Positions 644 to 719 (NDVRPPSDSG…FEGPNTKSVL (76 aa)) are disordered. The span at 667-678 (RRNHRDKYNKRH) shows a compositional bias: basic residues. Polar residues-rich tracts occupy residues 683–692 (DSNSGNSSRA) and 706–719 (EQQT…KSVL).

The protein belongs to the mut-7 family. It depends on Mg(2+) as a cofactor.

In terms of biological role, possesses 3'-5' exoribonuclease activity. Required for 3'-end trimming of AGO1-bound miRNAs. In Aedes aegypti (Yellowfever mosquito), this protein is Exonuclease mut-7 homolog.